Reading from the N-terminus, the 510-residue chain is DNA nucleotidylexotransferase (510 aa).

Residues 1–22 are disordered; that stretch reads MDPLQAVHLGPRKKRPRQLGTP. The Nuclear localization signal signature appears at 11–17; sequence PRKKRPR. Residues 27–124 form the BRCT domain; that stretch reads PYDIRFRDLV…KPVEMMGRHQ (98 aa). At serine 134 the chain carries Phosphoserine. Residues 151-510 are mediates interaction with DNTTIP2; sequence SQYACQRRTT…DYIEPWERNA (360 aa). An involved in DNA binding region spans residues 258 to 262; it reads VGLKT. A 2'-deoxyribonucleoside 5'-triphosphate-binding positions include 333-338 and 342-345; these read GFRRGK and HDVD. Residues aspartate 343, aspartate 345, and aspartate 434 each contribute to the Mg(2+) site. Residue 449-450 participates in a 2'-deoxyribonucleoside 5'-triphosphate binding; the sequence is GW.

It belongs to the DNA polymerase type-X family. In terms of assembly, interacts with PRP19 and DNTTIP1. Forms a ternary complex with DNTTIP2 and core histone. Released from this complex by PCNA. Interacts with TRERF1. Mg(2+) is required as a cofactor. Isoform TDT-L: Expressed in the thymus, and, at lower levels, in the bone marrow. Detected in both cycling and noncycling pro-B and pre-B cells (at protein level). Isoform TDT-S: Expressed in both cycling and noncycling pro-B, but not pre-B, cells (at protein level). Not detected in mature peripheral or germinal center B cells.

It is found in the nucleus. Its subcellular location is the cytoplasm. The enzyme catalyses DNA(n) + a 2'-deoxyribonucleoside 5'-triphosphate = DNA(n+1) + diphosphate. Its function is as follows. Transferase that catalyzes the nontemplated addition of nucleoside triphosphate to coding ends during V(D)J recombination (N addition). Involved in the generation of diversity in the antigen-binding region of immunoglobulin heavy and light chains and T-cell receptors during B- and T-cell development. Does not act on double-stranded DNA with blunt ends. In terms of biological role, 3'-to-5' DNA exonuclease. Involved in the generation of diversity in the antigen-binding region of immunoglobulin heavy and light chains and T-cell receptors during B- and T-cell development. Acts on single-stranded and double-stranded DNA with 3' or 5' extensions, but not on double-stranded DNA with blunt ends. Attenuates not only isoform TDT-S-catalyzed N addition, but also P (palindromic) addition in coding joins. Lacks terminal transferase activity. The sequence is that of DNA nucleotidylexotransferase (Dntt) from Mus musculus (Mouse).